A 194-amino-acid polypeptide reads, in one-letter code: ECF RNA polymerase sigma factor SigX (194 aa).

The Polymerase core binding signature appears at 32–45 (DLLQEVYIRVLNSY). A DNA-binding region (H-T-H motif) is located at residues 136–155 (IQETAKALRFSESKVKTTQH).

The protein belongs to the sigma-70 factor family. ECF subfamily. As to quaternary structure, interacts transiently with the RNAP core.

It localises to the cell membrane. In terms of biological role, sigma factors are initiation factors that promote the attachment of RNA polymerase (RNAP) to specific initiation sites and are then released. May be involved in the regulation of iron metabolism. Associates with RNAP core during early growth phases, association decreases as cells age. In Bacillus subtilis (strain 168), this protein is ECF RNA polymerase sigma factor SigX (sigX).